The chain runs to 266 residues: Luciferase (266 aa).

A helical membrane pass occupies residues 22–41 (GLATACCAVAVASAIAFPYI).

It belongs to the fungal luciferase family.

The protein resides in the membrane. It catalyses the reaction 3-hydroxyhispidin + O2 = (E)-caffeoylpyruvate + hnu + CO2. The catalysed reaction is 3-hydroxyhispidin + O2 = 4-[(E)-2-(3,4-dihydroxyphenyl)ethenyl]-1,7-dihydroxy-2,3,5-trioxabicyclo[2.2.2]oct-7-en-6-one. In terms of biological role, luciferase; part of the gene cluster that mediates the fungal bioluminescence cycle. Uses the fungal luciferin 3-hydroxyhispidin as a substrate to produce an endoperoxide as a high-energy intermediate with decomposition that yields oxyluciferin (also known as caffeoylpyruvate) and light emission. The fungal bioluminescence cycle begins with the hispidin synthetase that catalyzes the formation of hispidin which is further hydroxylated by the hispidin-3-hydroxylase, yielding the fungal luciferin 3-hydroxyhispidin. The luciferase then produces an endoperoxide as a high-energy intermediate with decomposition that yields oxyluciferin and light emission. Oxyluciferin can be recycled to caffeic acid by caffeoylpyruvate hydrolase. In Armillaria ostoyae (Armillaria root rot fungus), this protein is Luciferase.